The primary structure comprises 123 residues: Histone H2B.3 (123 aa).

Residues 1-30 (MPPKVSGKAAKKAGKAQKNISKGDKKKNRK) are disordered. An O-linked (GlcNAc) serine glycan is attached at Ser-110. A Glycyl lysine isopeptide (Lys-Gly) (interchain with G-Cter in ubiquitin) cross-link involves residue Lys-118.

The protein belongs to the histone H2B family. In terms of assembly, the nucleosome is a histone octamer containing two molecules each of H2A, H2B, H3 and H4 assembled in one H3-H4 heterotetramer and two H2A-H2B heterodimers. The octamer wraps approximately 147 bp of DNA. Monoubiquitination of Lys-118 gives a specific tag for epigenetic transcriptional activation and is also prerequisite for histone H3 'Lys-4' and 'Lys-79' methylation. In terms of processing, glcNAcylation at Ser-110 promotes monoubiquitination of Lys-118. It fluctuates in response to extracellular glucose, and associates with transcribed genes.

Its subcellular location is the nucleus. It is found in the chromosome. In terms of biological role, core component of nucleosome. Nucleosomes wrap and compact DNA into chromatin, limiting DNA accessibility to the cellular machineries which require DNA as a template. Histones thereby play a central role in transcription regulation, DNA repair, DNA replication and chromosomal stability. DNA accessibility is regulated via a complex set of post-translational modifications of histones, also called histone code, and nucleosome remodeling. This is Histone H2B.3 from Tigriopus californicus (Marine copepod).